We begin with the raw amino-acid sequence, 454 residues long: Bifunctional protein GlmU (454 aa).

The tract at residues 1-227 (MTQLSVVILA…FMEVEGANNR (227 aa)) is pyrophosphorylase. Residues 9–12 (LAAG), K23, Q74, 79–80 (GT), 101–103 (YGD), G138, E152, N167, and N225 contribute to the UDP-N-acetyl-alpha-D-glucosamine site. D103 contributes to the Mg(2+) binding site. A Mg(2+)-binding site is contributed by N225. A linker region spans residues 228 to 248 (LQLAALERFYQKTQAEKLLLA). The N-acetyltransferase stretch occupies residues 249-454 (GVRLIDQARF…QGWQRPTKKK (206 aa)). The UDP-N-acetyl-alpha-D-glucosamine site is built by R331 and K349. H361 acts as the Proton acceptor in catalysis. 2 residues coordinate UDP-N-acetyl-alpha-D-glucosamine: Y364 and N375. Acetyl-CoA contacts are provided by residues A378, 384 to 385 (NY), S403, A421, and R438.

In the N-terminal section; belongs to the N-acetylglucosamine-1-phosphate uridyltransferase family. This sequence in the C-terminal section; belongs to the transferase hexapeptide repeat family. In terms of assembly, homotrimer. Mg(2+) is required as a cofactor.

The protein resides in the cytoplasm. The catalysed reaction is alpha-D-glucosamine 1-phosphate + acetyl-CoA = N-acetyl-alpha-D-glucosamine 1-phosphate + CoA + H(+). The enzyme catalyses N-acetyl-alpha-D-glucosamine 1-phosphate + UTP + H(+) = UDP-N-acetyl-alpha-D-glucosamine + diphosphate. The protein operates within nucleotide-sugar biosynthesis; UDP-N-acetyl-alpha-D-glucosamine biosynthesis; N-acetyl-alpha-D-glucosamine 1-phosphate from alpha-D-glucosamine 6-phosphate (route II): step 2/2. It participates in nucleotide-sugar biosynthesis; UDP-N-acetyl-alpha-D-glucosamine biosynthesis; UDP-N-acetyl-alpha-D-glucosamine from N-acetyl-alpha-D-glucosamine 1-phosphate: step 1/1. It functions in the pathway bacterial outer membrane biogenesis; LPS lipid A biosynthesis. Catalyzes the last two sequential reactions in the de novo biosynthetic pathway for UDP-N-acetylglucosamine (UDP-GlcNAc). The C-terminal domain catalyzes the transfer of acetyl group from acetyl coenzyme A to glucosamine-1-phosphate (GlcN-1-P) to produce N-acetylglucosamine-1-phosphate (GlcNAc-1-P), which is converted into UDP-GlcNAc by the transfer of uridine 5-monophosphate (from uridine 5-triphosphate), a reaction catalyzed by the N-terminal domain. This is Bifunctional protein GlmU from Actinobacillus pleuropneumoniae serotype 7 (strain AP76).